We begin with the raw amino-acid sequence, 801 residues long: Leucine--tRNA ligase (801 aa).

The short motif at proline 39 to histidine 50 is the 'HIGH' region element. The short motif at lysine 578–serine 582 is the 'KMSKS' region element. Lysine 581 is an ATP binding site.

The protein belongs to the class-I aminoacyl-tRNA synthetase family.

Its subcellular location is the cytoplasm. The enzyme catalyses tRNA(Leu) + L-leucine + ATP = L-leucyl-tRNA(Leu) + AMP + diphosphate. This is Leucine--tRNA ligase from Mesoplasma florum (strain ATCC 33453 / NBRC 100688 / NCTC 11704 / L1) (Acholeplasma florum).